The sequence spans 285 residues: MLFNAVHNSLPPNIDIDHAILRGEDHPPTCAKCVARGRISALGSLDLRYHSLRCYAAPPDVGRCEFVPPRRRVLIANQGLDVSRLPPTGTVTLLLADVEESTHLWQMCPEDMATAIAHLDHTVSEAITNHGGVQPVKRYEGDSFVAAFTRASDAAACALDLQRTSLAPIRLRIGLHTGEVQLRDELYVGPTINRTARLRDLAHGGQVVLSAATGDLVTGRLPADAWLVDLGRHPLRGLPRPEWVMQLCHPDIREKFPPLRTAKSSPTSILPAQFTTFVGRRAQIS.

Residues 92–199 form the Guanylate cyclase domain; that stretch reads TLLLADVEES…PTINRTARLR (108 aa).

This sequence belongs to the adenylyl cyclase class-4/guanylyl cyclase family.

This is an uncharacterized protein from Mycobacterium tuberculosis (strain CDC 1551 / Oshkosh).